The chain runs to 385 residues: Methylthioribose-1-phosphate isomerase (385 aa).

Residue Asp-255 is the Proton donor of the active site.

Belongs to the eIF-2B alpha/beta/delta subunits family. MtnA subfamily.

It localises to the cytoplasm. The protein resides in the nucleus. The enzyme catalyses 5-(methylsulfanyl)-alpha-D-ribose 1-phosphate = 5-(methylsulfanyl)-D-ribulose 1-phosphate. It participates in amino-acid biosynthesis; L-methionine biosynthesis via salvage pathway; L-methionine from S-methyl-5-thio-alpha-D-ribose 1-phosphate: step 1/6. Catalyzes the interconversion of methylthioribose-1-phosphate (MTR-1-P) into methylthioribulose-1-phosphate (MTRu-1-P). This chain is Methylthioribose-1-phosphate isomerase (mri1), found in Aspergillus clavatus (strain ATCC 1007 / CBS 513.65 / DSM 816 / NCTC 3887 / NRRL 1 / QM 1276 / 107).